The chain runs to 99 residues: MICOS complex subunit MIC10 (99 aa).

A run of 2 helical transmembrane segments spans residues 27-43 (RFVY…LLFF) and 50-66 (WASI…SAYT).

It belongs to the MICOS complex subunit Mic10 family. As to quaternary structure, component of the mitochondrial contact site and cristae organizing system (MICOS) complex. The MICOS complex associates with mitochondrial outer membrane proteins. Present in a large lipid-enriched complex called mitochondrial transmembrane lipoprotein (MTL) complex made of proteins located in the two mitochondrial membranes, including the TOM complex and the core components of the MICOS complex and containing at least digalactosyldiacylglycerol (DGDG).

The protein resides in the mitochondrion inner membrane. Component of the MICOS complex, a large protein complex of the mitochondrial inner membrane that plays crucial roles in the maintenance of crista junctions, inner membrane architecture, and formation of contact sites to the outer membrane. The chain is MICOS complex subunit MIC10 from Arabidopsis thaliana (Mouse-ear cress).